We begin with the raw amino-acid sequence, 533 residues long: Trigger factor (533 aa).

Residues 164–249 (GDQLIIDFTG…VKQVKVETDT (86 aa)) form the PPIase FKBP-type domain. The tract at residues 436–533 (EAAIEAEAEE…APAKKPAAKK (98 aa)) is disordered. Residues 465 to 477 (AAAKKAPAKKAPA) are compositionally biased toward basic residues. Residues 481–490 (AAKDGDEKPA) are compositionally biased toward basic and acidic residues. Composition is skewed to basic residues over residues 494 to 506 (APAK…KAST) and 515 to 533 (PAKK…AAKK).

It belongs to the FKBP-type PPIase family. Tig subfamily.

It is found in the cytoplasm. The catalysed reaction is [protein]-peptidylproline (omega=180) = [protein]-peptidylproline (omega=0). Its function is as follows. Involved in protein export. Acts as a chaperone by maintaining the newly synthesized protein in an open conformation. Functions as a peptidyl-prolyl cis-trans isomerase. The polypeptide is Trigger factor (Erythrobacter litoralis (strain HTCC2594)).